Reading from the N-terminus, the 109-residue chain is NADH-quinone oxidoreductase subunit K (109 aa).

3 helical membrane passes run 12 to 32, 40 to 60, and 72 to 92; these read LNHY…GLFM, ILMS…AFSV, and IIIL…LLIY.

The protein belongs to the complex I subunit 4L family. As to quaternary structure, NDH-1 is composed of 14 different subunits. Subunits NuoA, H, J, K, L, M, N constitute the membrane sector of the complex.

It is found in the cell inner membrane. The enzyme catalyses a quinone + NADH + 5 H(+)(in) = a quinol + NAD(+) + 4 H(+)(out). Its function is as follows. NDH-1 shuttles electrons from NADH, via FMN and iron-sulfur (Fe-S) centers, to quinones in the respiratory chain. The immediate electron acceptor for the enzyme in this species is believed to be ubiquinone. Couples the redox reaction to proton translocation (for every two electrons transferred, four hydrogen ions are translocated across the cytoplasmic membrane), and thus conserves the redox energy in a proton gradient. The protein is NADH-quinone oxidoreductase subunit K of Rickettsia bellii (strain RML369-C).